Consider the following 178-residue polypeptide: Adenine phosphoribosyltransferase (178 aa).

Belongs to the purine/pyrimidine phosphoribosyltransferase family. Homodimer.

The protein resides in the cytoplasm. It catalyses the reaction AMP + diphosphate = 5-phospho-alpha-D-ribose 1-diphosphate + adenine. The protein operates within purine metabolism; AMP biosynthesis via salvage pathway; AMP from adenine: step 1/1. In terms of biological role, catalyzes a salvage reaction resulting in the formation of AMP, that is energically less costly than de novo synthesis. This Pseudoalteromonas atlantica (strain T6c / ATCC BAA-1087) protein is Adenine phosphoribosyltransferase.